A 273-amino-acid polypeptide reads, in one-letter code: Large ribosomal subunit protein uL2 (273 aa).

Disordered regions lie at residues 28–53 and 221–273; these read KPFA…TTRH and RGTA…RRSK. A compositionally biased stretch (low complexity) spans 39-48; that stretch reads KSGGRNNNGR. Lysine 242 carries the N6-acetyllysine modification.

It belongs to the universal ribosomal protein uL2 family. In terms of assembly, part of the 50S ribosomal subunit. Forms a bridge to the 30S subunit in the 70S ribosome.

One of the primary rRNA binding proteins. Required for association of the 30S and 50S subunits to form the 70S ribosome, for tRNA binding and peptide bond formation. It has been suggested to have peptidyltransferase activity; this is somewhat controversial. Makes several contacts with the 16S rRNA in the 70S ribosome. The chain is Large ribosomal subunit protein uL2 from Shigella dysenteriae serotype 1 (strain Sd197).